The sequence spans 119 residues: DNA-binding protein Maeo_0998 (119 aa).

Residues Met-1–Met-11 show a composition bias toward basic and acidic residues. The segment at Met-1–Arg-36 is disordered. The segment covering Gln-15–Gln-32 has biased composition (low complexity).

Belongs to the PDCD5 family.

The sequence is that of DNA-binding protein Maeo_0998 from Methanococcus aeolicus (strain ATCC BAA-1280 / DSM 17508 / OCM 812 / Nankai-3).